The sequence spans 507 residues: Maturase K (507 aa).

This sequence belongs to the intron maturase 2 family. MatK subfamily.

The protein localises to the plastid. Its subcellular location is the chloroplast. Its function is as follows. Usually encoded in the trnK tRNA gene intron. Probably assists in splicing its own and other chloroplast group II introns. In Magnolia champaca (Yellow jade orchid tree), this protein is Maturase K.